The following is a 343-amino-acid chain: 4-hydroxyproline 2-epimerase 1 (343 aa).

The active-site Proton acceptor is Ser90. Residues 91–92, Asp251, and 256–257 each bind substrate; these read GS and GT.

The protein belongs to the proline racemase family.

The enzyme catalyses trans-4-hydroxy-L-proline = cis-4-hydroxy-D-proline. In terms of biological role, catalyzes the epimerization of trans-4-hydroxy-L-proline (t4LHyp) to cis-4-hydroxy-D-proline (c4DHyp) in vitro, albeit with low efficiency. The physiological substrate may be different. Displays no proline racemase activity. This is 4-hydroxyproline 2-epimerase 1 from Brucella anthropi (strain ATCC 49188 / DSM 6882 / CCUG 24695 / JCM 21032 / LMG 3331 / NBRC 15819 / NCTC 12168 / Alc 37) (Ochrobactrum anthropi).